A 573-amino-acid chain; its full sequence is 2-isopropylmalate synthase (573 aa).

One can recognise a Pyruvate carboxyltransferase domain in the interval 37 to 314 (PRWLSTDLRD…DPQIDFSNID (278 aa)). Aspartate 46, histidine 253, histidine 255, and asparagine 289 together coordinate Mg(2+). Positions 456 to 573 (NPRNPWGRIQ…VVSAVNRAAR (118 aa)) are regulatory domain.

Belongs to the alpha-IPM synthase/homocitrate synthase family. LeuA type 2 subfamily. As to quaternary structure, homodimer. It depends on Mg(2+) as a cofactor.

It is found in the cytoplasm. The catalysed reaction is 3-methyl-2-oxobutanoate + acetyl-CoA + H2O = (2S)-2-isopropylmalate + CoA + H(+). Its pathway is amino-acid biosynthesis; L-leucine biosynthesis; L-leucine from 3-methyl-2-oxobutanoate: step 1/4. In terms of biological role, catalyzes the condensation of the acetyl group of acetyl-CoA with 3-methyl-2-oxobutanoate (2-ketoisovalerate) to form 3-carboxy-3-hydroxy-4-methylpentanoate (2-isopropylmalate). The sequence is that of 2-isopropylmalate synthase from Streptomyces avermitilis (strain ATCC 31267 / DSM 46492 / JCM 5070 / NBRC 14893 / NCIMB 12804 / NRRL 8165 / MA-4680).